The sequence spans 104 residues: Zinc-containing ferredoxin-2 (104 aa).

The segment at 2–37 is N-terminal extension; sequence GIDPNYRQNRQVVGEHEGHKIYGPVEPPGKLGIHGT. His-17, His-20, and His-35 together coordinate Zn(2+). 4Fe-4S ferredoxin-type domains follow at residues 38–66 and 75–104; these read IVGV…WFDT and KADP…VKPP. [3Fe-4S] cluster is bound by residues Cys-46 and Cys-52. Cys-56 is a binding site for [4Fe-4S] cluster. Asp-77 lines the Zn(2+) pocket. 3 residues coordinate [4Fe-4S] cluster: Cys-84, Cys-87, and Cys-90. Residue Cys-94 participates in [3Fe-4S] cluster binding.

[3Fe-4S] cluster is required as a cofactor. Requires [4Fe-4S] cluster as cofactor. It depends on Zn(2+) as a cofactor.

Functionally, ferredoxins are iron-sulfur proteins that transfer electrons in a wide variety of metabolic reactions. In Sulfurisphaera tokodaii (strain DSM 16993 / JCM 10545 / NBRC 100140 / 7) (Sulfolobus tokodaii), this protein is Zinc-containing ferredoxin-2 (zfx2).